Consider the following 65-residue polypeptide: Prokaryotic ubiquitin-like protein Pup (65 aa).

Positions 1–14 are enriched in basic and acidic residues; sequence MSGHEQQRPSRREE. The segment at 1-35 is disordered; the sequence is MSGHEQQRPSRREEDVEETPVVPAQAGAQAKESDA. The ARC ATPase binding stretch occupies residues 21-59; sequence VVPAQAGAQAKESDADVDALLDEIDEVLESNSEEFVRGF. The stretch at 26-49 forms a coiled coil; the sequence is AGAQAKESDADVDALLDEIDEVLE. The residue at position 65 (Gln-65) is a Deamidated glutamine. Gln-65 is covalently cross-linked (Isoglutamyl lysine isopeptide (Gln-Lys) (interchain with K-? in acceptor proteins)).

It belongs to the prokaryotic ubiquitin-like protein family. Strongly interacts with the proteasome-associated ATPase ARC through a hydrophobic interface; the interacting region of Pup lies in its C-terminal half. There is one Pup binding site per ARC hexamer ring. Post-translationally, is modified by deamidation of its C-terminal glutamine to glutamate by the deamidase Dop, a prerequisite to the subsequent pupylation process.

It participates in protein degradation; proteasomal Pup-dependent pathway. In terms of biological role, protein modifier that is covalently attached to lysine residues of substrate proteins, thereby targeting them for proteasomal degradation. The tagging system is termed pupylation. The chain is Prokaryotic ubiquitin-like protein Pup from Kineococcus radiotolerans (strain ATCC BAA-149 / DSM 14245 / SRS30216).